We begin with the raw amino-acid sequence, 415 residues long: Multidrug resistance protein MdtA (415 aa).

Residues 1-21 (MKGSYKSRWVIVIVVVIAAIA) form the signal peptide. The segment covering 31–47 (DSQSAAPGATKQAQQSP) has biased composition (polar residues). Disordered regions lie at residues 31–60 (DSQS…GPLA) and 392–415 (EAQS…GARS). Residues 399–415 (PEEKATSREYAKKGARS) show a composition bias toward basic and acidic residues.

The protein belongs to the membrane fusion protein (MFP) (TC 8.A.1) family. As to quaternary structure, part of a tripartite efflux system composed of MdtA, MdtB and MdtC.

Its subcellular location is the cell inner membrane. Functionally, the MdtABC tripartite complex confers resistance against novobiocin and deoxycholate. The chain is Multidrug resistance protein MdtA from Escherichia coli O8 (strain IAI1).